The sequence spans 482 residues: Glutamate--tRNA ligase 1 (482 aa).

A 'HIGH' region motif is present at residues 18-28 (PSPTGYLHLGG). A 'KMSKS' region motif is present at residues 252-256 (KLSKR). Lys255 is an ATP binding site.

The protein belongs to the class-I aminoacyl-tRNA synthetase family. Glutamate--tRNA ligase type 1 subfamily. As to quaternary structure, monomer.

Its subcellular location is the cytoplasm. It carries out the reaction tRNA(Glu) + L-glutamate + ATP = L-glutamyl-tRNA(Glu) + AMP + diphosphate. In terms of biological role, catalyzes the attachment of glutamate to tRNA(Glu) in a two-step reaction: glutamate is first activated by ATP to form Glu-AMP and then transferred to the acceptor end of tRNA(Glu). In Erythrobacter litoralis (strain HTCC2594), this protein is Glutamate--tRNA ligase 1.